We begin with the raw amino-acid sequence, 217 residues long: Small ribosomal subunit protein uS3 (217 aa).

The region spanning 38-106 (IRKFINKELA…QVHINIIEIK (69 aa)) is the KH type-2 domain.

It belongs to the universal ribosomal protein uS3 family. Part of the 30S ribosomal subunit. Forms a tight complex with proteins S10 and S14.

Binds the lower part of the 30S subunit head. Binds mRNA in the 70S ribosome, positioning it for translation. This Streptococcus equi subsp. equi (strain 4047) protein is Small ribosomal subunit protein uS3.